The chain runs to 333 residues: NADH-quinone oxidoreductase subunit H (333 aa).

8 helical membrane-spanning segments follow: residues 15 to 35 (FFIF…FVTY), 88 to 108 (FILA…VIPF), 117 to 137 (IGVG…GVLT), 159 to 179 (ISYE…TGSL), 191 to 211 (VWYI…AVAE), 241 to 261 (FFML…TVLF), 273 to 293 (FIPG…LFIW), and 313 to 333 (VLLP…ELFF).

Belongs to the complex I subunit 1 family. In terms of assembly, NDH-1 is composed of 14 different subunits. Subunits NuoA, H, J, K, L, M, N constitute the membrane sector of the complex.

The protein localises to the cell membrane. The catalysed reaction is a quinone + NADH + 5 H(+)(in) = a quinol + NAD(+) + 4 H(+)(out). Its function is as follows. NDH-1 shuttles electrons from NADH, via FMN and iron-sulfur (Fe-S) centers, to quinones in the respiratory chain. The immediate electron acceptor for the enzyme in this species is believed to be ubiquinone. Couples the redox reaction to proton translocation (for every two electrons transferred, four hydrogen ions are translocated across the cytoplasmic membrane), and thus conserves the redox energy in a proton gradient. This subunit may bind ubiquinone. The sequence is that of NADH-quinone oxidoreductase subunit H from Bacillus cytotoxicus (strain DSM 22905 / CIP 110041 / 391-98 / NVH 391-98).